A 414-amino-acid chain; its full sequence is Chaperone protein dnaJ 39 (414 aa).

The span at 1–24 shows a compositional bias: basic and acidic residues; the sequence is MATHSSRSENKDAGEEDELRRRNP. The disordered stretch occupies residues 1 to 36; it reads MATHSSRSENKDAGEEDELRRRNPYEVLGIPSNSTD. The region spanning 23-88 is the J domain; the sequence is NPYEVLGIPS…ENRRLYDTTG (66 aa). The stretch at 296-324 forms a coiled coil; the sequence is EKESLRSTEAQIVSKRTELLKFEAEYHEV. Positions 362 to 395 are disordered; that stretch reads TKQGSSKSRSWSKKKSSLLMEPREEGEVAVREEG. Residues 382 to 395 are compositionally biased toward basic and acidic residues; it reads EPREEGEVAVREEG.

It belongs to the DnaJ family. C/III subfamily. In terms of tissue distribution, expressed constitutively at low levels in seedlings, roots, leaves, stems, flowers and siliques.

Its subcellular location is the membrane. Functionally, plays a continuous role in plant development probably in the structural organization of compartments. Seems to be involved in early gravitropic signal transduction within the gravity-perceiving cells (statocytes). The protein is Chaperone protein dnaJ 39 (ATJ39) of Arabidopsis thaliana (Mouse-ear cress).